Consider the following 859-residue polypeptide: Protein FAM171A1 (859 aa).

Positions 1-20 are cleaved as a signal peptide; that stretch reads MSGSTAVALLFCVLSCSVWG. Over 21–307 the chain is Extracellular; the sequence is AGSKASHEHN…VTQDITSYHT (287 aa). 3 N-linked (GlcNAc...) asparagine glycosylation sites follow: N163, N194, and N198. Residues 308 to 328 form a helical membrane-spanning segment; sequence IFLLAILGGIAFILLVLLCIL. The Cytoplasmic segment spans residues 329–859; it reads LYYCRRKCLK…ERPLLAFNKK (531 aa). Disordered regions lie at residues 397–421, 484–509, and 771–859; these read SRDF…LDNL, TNHV…PEPE, and QSPS…FNKK. Positions 400 to 416 are enriched in basic and acidic residues; it reads FGSREELLSHQEEKSRM. Composition is skewed to polar residues over residues 484 to 497 and 797 to 806; these read TNHV…NIQE and SGSQTPSLQE. The span at 838-852 shows a compositional bias: basic and acidic residues; sequence GENKKSPWQKREERP.

It belongs to the FAM171 family.

It localises to the cell membrane. Its function is as follows. May be involved in the regulation of the cytoskeletal dynamics, plays a role in actin stress fiber formation. In Xenopus laevis (African clawed frog), this protein is Protein FAM171A1 (fam171a1).